Consider the following 484-residue polypeptide: Threonine synthase-like 2 (484 aa).

Residue lysine 113 is modified to N6-(pyridoxal phosphate)lysine.

It belongs to the threonine synthase family. The cofactor is pyridoxal 5'-phosphate.

The protein localises to the secreted. Its function is as follows. Acts as a catabolic phospho-lyase on both gamma- and beta-phosphorylated substrates. Degrades O-phospho-threonine (PThr) to alpha-ketobutyrate, ammonia and phosphate. Functionally, potent inducer of osteoblastic production of IL6. May act to exacerbate inflammation and/or bone turnover under inflammatory conditions. The sequence is that of Threonine synthase-like 2 (THNSL2) from Homo sapiens (Human).